The sequence spans 369 residues: Protein V (369 aa).

2 disordered regions span residues 1-23 and 54-320; these read MDQD…GGRE and INTL…GHRR. Basic and acidic residues-rich tracts occupy residues 7–20, 99–110, 150–168, and 175–193; these read ISKE…EASG, AEAHARNVDKQN, GAED…RGED, and EEIR…RADN. Phosphoserine; by host occurs at positions 249, 257, and 260. Zn(2+) is bound by residues His-318, Cys-337, Cys-341, Cys-353, Cys-355, Cys-358, Cys-362, and Cys-365.

Belongs to the paramyxoviruses V protein family. As to quaternary structure, interacts with host IFIH1/MDA5 and DHX58/LGP2. Interacts with host IRF3. Interacts with host RIGI regulatory protein (via CARDs domain) and host TRIM25 (via SPRY domain); these interactions prevent TRIM25-mediated ubiquitination of RIG-I and disrupts downstream RIG-I signaling.

The protein localises to the host cytoplasm. Functionally, plays an essential role in the inhibition of host immune response. Prevents the establishment of cellular antiviral state by blocking interferon-alpha/beta (IFN-alpha/beta) production and signaling pathway. Interacts with host IFIH1/MDA5 and DHX58/LGP2 to inhibit the transduction pathway involved in the activation of IFN-beta promoter, thus protecting the virus against cell antiviral state. Also interacts with and inhibits host IRF3. Blocks the type I interferon signaling pathway by disrupting the RIG-I signaling pathway. In Cavia cutleri (Guinea pig), this protein is Protein V (P/V/C).